A 266-amino-acid polypeptide reads, in one-letter code: Putative pyruvate, phosphate dikinase regulatory protein (266 aa).

An ADP-binding site is contributed by 147–154 (GLSRTSKT).

It belongs to the pyruvate, phosphate/water dikinase regulatory protein family. PDRP subfamily.

The catalysed reaction is N(tele)-phospho-L-histidyl/L-threonyl-[pyruvate, phosphate dikinase] + ADP = N(tele)-phospho-L-histidyl/O-phospho-L-threonyl-[pyruvate, phosphate dikinase] + AMP + H(+). It catalyses the reaction N(tele)-phospho-L-histidyl/O-phospho-L-threonyl-[pyruvate, phosphate dikinase] + phosphate + H(+) = N(tele)-phospho-L-histidyl/L-threonyl-[pyruvate, phosphate dikinase] + diphosphate. In terms of biological role, bifunctional serine/threonine kinase and phosphorylase involved in the regulation of the pyruvate, phosphate dikinase (PPDK) by catalyzing its phosphorylation/dephosphorylation. This Clostridium perfringens (strain 13 / Type A) protein is Putative pyruvate, phosphate dikinase regulatory protein.